The sequence spans 115 residues: Large ribosomal subunit protein bL19 (115 aa).

The protein belongs to the bacterial ribosomal protein bL19 family.

In terms of biological role, this protein is located at the 30S-50S ribosomal subunit interface and may play a role in the structure and function of the aminoacyl-tRNA binding site. The protein is Large ribosomal subunit protein bL19 (rplS) of Buchnera aphidicola subsp. Acyrthosiphon pisum (strain APS) (Acyrthosiphon pisum symbiotic bacterium).